Reading from the N-terminus, the 305-residue chain is Ribonuclease BN (305 aa).

Positions 64, 66, 68, 69, 141, 212, and 270 each coordinate Zn(2+). Aspartate 68 (proton acceptor) is an active-site residue.

It belongs to the RNase Z family. RNase BN subfamily. Homodimer. Zn(2+) is required as a cofactor.

In terms of biological role, zinc phosphodiesterase, which has both exoribonuclease and endoribonuclease activities. This is Ribonuclease BN from Shigella flexneri.